The chain runs to 310 residues: Vomeronasal type-1 receptor 101 (310 aa).

Residues 1 to 19 lie on the Extracellular side of the membrane; the sequence is MNKVNILPSDTNMKITLFS. The helical transmembrane segment at 20-40 threads the bilayer; sequence ELSVGISANSILFFAHLCMFF. At 41 to 49 the chain is on the cytoplasmic side; it reads EENRSKPID. The helical transmembrane segment at 50–70 threads the bilayer; that stretch reads LCIAFLSLTQLMLLVTMGLIA. Topologically, residues 71-93 are extracellular; that stretch reads ADMFMAQGIWDITTCRSLIYFHR. Cys85 and Cys172 are oxidised to a cystine. A helical membrane pass occupies residues 94–114; that stretch reads LLRGFNLCAACLLHILWTFTL. At 115–134 the chain is on the cytoplasmic side; the sequence is SPRSSCLTKFKHKSPHHISG. Residues 135–155 traverse the membrane as a helical segment; sequence AYLFFCVLYMSFSSHLFVLVI. Over 156-193 the chain is Extracellular; the sequence is ATSNLTSDHFMYVTQSCSLLPMSYSRTSTFSLLMVTRE. Residue Asn159 is glycosylated (N-linked (GlcNAc...) asparagine). A helical membrane pass occupies residues 194 to 214; sequence VFLISLMALSSGYMVTLLWRH. The Cytoplasmic portion of the chain corresponds to 215–238; sequence KKQAQHLHSTRLSSKASPQQRATR. A helical transmembrane segment spans residues 239–259; sequence TILLLMTFFVVFYILGTVIFH. The Extracellular segment spans residues 260-268; it reads SRTKFKDGS. The helical transmembrane segment at 269–289 threads the bilayer; that stretch reads IFYCVQIIVSHSYATISPFVF. At 290–310 the chain is on the cytoplasmic side; it reads VFSEKRIIKFFRSMCGRIVNT.

Belongs to the G-protein coupled receptor 1 family. In terms of tissue distribution, expressed in 1-4% of neurons of the vomeronasal organ. Only one pheromone receptor gene may be expressed in a particular neuron. Not expressed in the main olfactory epithelium.

It is found in the cell membrane. In terms of biological role, putative pheromone receptor implicated in the regulation of social as well as reproductive behavior. This Rattus norvegicus (Rat) protein is Vomeronasal type-1 receptor 101 (Vom1r101).